The following is an 878-amino-acid chain: Protein argonaute 6 (878 aa).

A compositionally biased stretch (low complexity) spans 1-17; sequence METSSSLPLSPISIEPE. The disordered stretch occupies residues 1–25; it reads METSSSLPLSPISIEPEQPSHRDYD. The PAZ domain occupies 259-372; that stretch reads PVIEFLKANQ…LPLEFCNLVS (114 aa). The Piwi domain maps to 541 to 851; that stretch reads FILCILPERK…AAAQVAQFTK (311 aa).

The protein belongs to the argonaute family. Ago subfamily. In terms of tissue distribution, expressed in roots, cotyledons and shoot meristematic region.

Its subcellular location is the nucleus. In terms of biological role, involved in transcriptional gene silencing (TGS). Component of the RISC complex that associate with the small interfering RNA (siRNA) pathway involved in direct cytosine methylation at endogenous DNA repeats. Required for the accumulation of specific siRNAs derived from transgene and heterochromatin-related endogenous loci. Involved in RNA-directed DNA methylation (RdDM) at specific endogenous loci. Probably not required for the accumulation of siRNAs derived from transgene inverted repeats that induce post-transcriptional gene silencing (PTGS). Associates mainly with small RNAs of 24 nucleotide in length and preferentially recruits small RNAs with a 5' terminal adenosine. Targeted by turnip yellows virus (TuYV) protein P0 (via F-box-like domain) for probable proteasome degradation and thereby inactivating AGO6 function in RNA silencing. This Arabidopsis thaliana (Mouse-ear cress) protein is Protein argonaute 6 (AGO6).